The chain runs to 1112 residues: DNA-directed RNA polymerase subunit beta (1112 aa).

Residues 1087–1112 (VGGRRTPNRPTYENIGGPREMEFSED) form a disordered region.

The protein belongs to the RNA polymerase beta chain family. In terms of assembly, in cyanobacteria the RNAP catalytic core is composed of 2 alpha, 1 beta, 1 beta', 1 gamma and 1 omega subunit. When a sigma factor is associated with the core the holoenzyme is formed, which can initiate transcription.

The enzyme catalyses RNA(n) + a ribonucleoside 5'-triphosphate = RNA(n+1) + diphosphate. Its function is as follows. DNA-dependent RNA polymerase catalyzes the transcription of DNA into RNA using the four ribonucleoside triphosphates as substrates. In Gloeobacter violaceus (strain ATCC 29082 / PCC 7421), this protein is DNA-directed RNA polymerase subunit beta.